A 159-amino-acid polypeptide reads, in one-letter code: 2-C-methyl-D-erythritol 2,4-cyclodiphosphate synthase (159 aa).

The a divalent metal cation site is built by Asp11 and His13. Residues 11–13 (DVH) and 37–38 (HS) each bind 4-CDP-2-C-methyl-D-erythritol 2-phosphate. His45 is a binding site for a divalent metal cation. Residues 59 to 61 (DIG) and 64 to 68 (FPDSD) each bind 4-CDP-2-C-methyl-D-erythritol 2-phosphate.

The protein belongs to the IspF family. In terms of assembly, homotrimer. The cofactor is a divalent metal cation.

The enzyme catalyses 4-CDP-2-C-methyl-D-erythritol 2-phosphate = 2-C-methyl-D-erythritol 2,4-cyclic diphosphate + CMP. It functions in the pathway isoprenoid biosynthesis; isopentenyl diphosphate biosynthesis via DXP pathway; isopentenyl diphosphate from 1-deoxy-D-xylulose 5-phosphate: step 4/6. In terms of biological role, involved in the biosynthesis of isopentenyl diphosphate (IPP) and dimethylallyl diphosphate (DMAPP), two major building blocks of isoprenoid compounds. Catalyzes the conversion of 4-diphosphocytidyl-2-C-methyl-D-erythritol 2-phosphate (CDP-ME2P) to 2-C-methyl-D-erythritol 2,4-cyclodiphosphate (ME-CPP) with a corresponding release of cytidine 5-monophosphate (CMP). The polypeptide is 2-C-methyl-D-erythritol 2,4-cyclodiphosphate synthase (Solibacter usitatus (strain Ellin6076)).